Consider the following 108-residue polypeptide: MLGYGGLTYTLHDSKPCLLIFAYLALKWRIIIGRKDHSHQRKCRLTVFSPFIFTPNGSLLLWSEVVDDIKRSSNFLGRPSPDHFSNHLAASVKQGLDVEVVCRQNNFV.

This is an uncharacterized protein from Saccharomyces cerevisiae (strain ATCC 204508 / S288c) (Baker's yeast).